Reading from the N-terminus, the 516-residue chain is Homeobox protein 6 (516 aa).

A compositionally biased stretch (low complexity) spans 22-31 (NYDFDNKNNS). Disordered regions lie at residues 22–140 (NYDF…PNCN), 200–256 (SLNN…SSPS), and 268–348 (DEND…NNGD). Residues 32-41 (IGGGGGGGGS) show a composition bias toward gly residues. Composition is skewed to low complexity over residues 42-59 (SSSR…SSSG), 66-78 (SNSS…IINS), and 101-132 (TTTT…NSSS). A compositionally biased stretch (low complexity) spans 284–346 (NNNNNNNNNN…NNNNTNTNNN (63 aa)). 2 DNA-binding regions (homeobox) span residues 362–421 (KSGQ…SKSG) and 424–483 (SYAK…NKLS). The interval 483–516 (SSKAIQDKDNQDNDNNNSNNNENNDDSYSDEGLF) is disordered. A compositionally biased stretch (low complexity) spans 495–504 (NDNNNSNNNE). The segment covering 505 to 516 (NNDDSYSDEGLF) has biased composition (acidic residues).

Its subcellular location is the nucleus. Putative transcription factor. The chain is Homeobox protein 6 (hbx6) from Dictyostelium discoideum (Social amoeba).